Consider the following 320-residue polypeptide: Aurora kinase B (320 aa).

The segment covering 1-10 has biased composition (basic and acidic residues); it reads MQNKENREPR. The segment at 1–38 is disordered; sequence MQNKENREPRVQQTPSAGVGPLRVEMNPDTHAVSGPGR. The region spanning 53–303 is the Protein kinase domain; it reads FDIGRPLGKG…LRSVMEHPWV (251 aa). ATP is bound by residues 59–67 and lysine 82; that span reads LGKGKFGNV. The active-site Proton acceptor is the aspartate 176.

This sequence belongs to the protein kinase superfamily. Ser/Thr protein kinase family. Aurora subfamily. Component of the chromosomal passenger complex (CPC).

Its subcellular location is the nucleus. It is found in the chromosome. The protein localises to the centromere. It localises to the cytoplasm. The protein resides in the cytoskeleton. Its subcellular location is the spindle. It is found in the midbody. The catalysed reaction is L-seryl-[protein] + ATP = O-phospho-L-seryl-[protein] + ADP + H(+). The enzyme catalyses L-threonyl-[protein] + ATP = O-phospho-L-threonyl-[protein] + ADP + H(+). Its activity is regulated as follows. Kinase activity is stimulated by cell-cycle specific phosphorylation. Functionally, serine/threonine-protein kinase component of the chromosomal passenger complex (CPC), a complex that acts as a key regulator of mitosis. The CPC complex has essential functions at the centromere in ensuring correct chromosome alignment and segregation and is required for chromatin-induced microtubule stabilization and spindle assembly. Involved in the bipolar attachment of spindle microtubules to kinetochores and is a key regulator for the onset of cytokinesis during mitosis. Required for central/midzone spindle assembly and cleavage furrow formation. Key component of the cytokinesis checkpoint, a process required to delay abscission to prevent both premature resolution of intercellular chromosome bridges and accumulation of DNA damage. Phosphorylates 'Ser-10' of histone H3 during mitosis. The chain is Aurora kinase B (aurkb) from Danio rerio (Zebrafish).